A 271-amino-acid chain; its full sequence is Putative carboxymethylenebutenolidase (271 aa).

Active-site residues include cysteine 147, aspartate 204, and histidine 236.

Belongs to the dienelactone hydrolase family.

It carries out the reaction 2-(5-oxo-2,5-dihydrofuran-2-ylidene)acetate + H2O = 4-oxohex-2-enedioate + H(+). This chain is Putative carboxymethylenebutenolidase (ysgA), found in Escherichia coli O157:H7.